Here is a 406-residue protein sequence, read N- to C-terminus: Aspartokinase (406 aa).

The region spanning 342-406 (IIGHGIKNDL…LLKISETGHC (65 aa)) is the ACT domain.

This sequence belongs to the aspartokinase family.

It carries out the reaction L-aspartate + ATP = 4-phospho-L-aspartate + ADP. The protein operates within amino-acid biosynthesis; L-lysine biosynthesis via DAP pathway; (S)-tetrahydrodipicolinate from L-aspartate: step 1/4. It participates in amino-acid biosynthesis; L-methionine biosynthesis via de novo pathway; L-homoserine from L-aspartate: step 1/3. It functions in the pathway amino-acid biosynthesis; L-threonine biosynthesis; L-threonine from L-aspartate: step 1/5. The sequence is that of Aspartokinase (lysC) from Rickettsia bellii (strain RML369-C).